Reading from the N-terminus, the 242-residue chain is Tryptophan synthase alpha chain (242 aa).

Catalysis depends on proton acceptor residues Glu31 and Asp42.

This sequence belongs to the TrpA family. As to quaternary structure, tetramer of two alpha and two beta chains.

The enzyme catalyses (1S,2R)-1-C-(indol-3-yl)glycerol 3-phosphate + L-serine = D-glyceraldehyde 3-phosphate + L-tryptophan + H2O. It functions in the pathway amino-acid biosynthesis; L-tryptophan biosynthesis; L-tryptophan from chorismate: step 5/5. The alpha subunit is responsible for the aldol cleavage of indoleglycerol phosphate to indole and glyceraldehyde 3-phosphate. This Staphylococcus aureus (strain Mu3 / ATCC 700698) protein is Tryptophan synthase alpha chain.